The following is a 591-amino-acid chain: Nuclear receptor subfamily 4 group A member 2 (591 aa).

2 disordered regions span residues 1 to 22 (MPCV…SQSY) and 110 to 133 (SEEM…SSTP). Residues 8–22 (YGSSPQGASPASQSY) show a composition bias toward low complexity. Residues 253–328 (EGLCAVCGDN…VGMVKEVVRT (76 aa)) constitute a DNA-binding region (nuclear receptor). 2 consecutive NR C4-type zinc fingers follow at residues 256–276 (CAVC…CEGC) and 292–311 (CLAN…CQYC). A Bipartite nuclear localization signal (NLS1) motif is present at residues 280 to 307 (FKRTVQKNAKYVCLANKNCPVDKRRRNR). The interval 330–354 (SLKGRRGRLPSKPKSPQEPSPPSPP) is disordered. A Nuclear localization signal (NLS1) motif is present at residues 331–343 (LKGRRGRLPSKPK). The span at 345–354 (PQEPSPPSPP) shows a compositional bias: pro residues. Positions 353–588 (PPVSLISALV…AIIDKLFLDT (236 aa)) constitute an NR LBD domain. A nuclear export sequence (NES1) motif is present at residues 436-445 (FLELFVLRLA). The nuclear export sequence (NES2) motif lies at 561–570 (QGLQRIFYLK).

This sequence belongs to the nuclear hormone receptor family.

The protein resides in the cytoplasm. The protein localises to the nucleus. Functionally, transcriptional regulator which may play a role in the differentiation and maintenance of meso-diencephalic dopaminergic (mdDA) neurons. The protein is Nuclear receptor subfamily 4 group A member 2 (nr4a2) of Xenopus tropicalis (Western clawed frog).